Reading from the N-terminus, the 398-residue chain is Cytochrome P450 165B3 (398 aa).

C347 serves as a coordination point for heme.

The protein belongs to the cytochrome P450 family. Requires heme as cofactor.

It functions in the pathway antibiotic biosynthesis; vancomycin biosynthesis. In terms of biological role, involved in the coupling of aromatic side chains of the heptapeptide of vancomycin. The sequence is that of Cytochrome P450 165B3 (cyp165B3) from Amycolatopsis orientalis (Nocardia orientalis).